We begin with the raw amino-acid sequence, 160 residues long: Cyclic pyranopterin monophosphate synthase (160 aa).

Residues 75 to 77 and 113 to 114 each bind substrate; these read LCH and ME. The active site involves Asp128.

The protein belongs to the MoaC family. In terms of assembly, homohexamer; trimer of dimers.

It catalyses the reaction (8S)-3',8-cyclo-7,8-dihydroguanosine 5'-triphosphate = cyclic pyranopterin phosphate + diphosphate. Its pathway is cofactor biosynthesis; molybdopterin biosynthesis. Its function is as follows. Catalyzes the conversion of (8S)-3',8-cyclo-7,8-dihydroguanosine 5'-triphosphate to cyclic pyranopterin monophosphate (cPMP). The sequence is that of Cyclic pyranopterin monophosphate synthase from Sodalis glossinidius (strain morsitans).